Consider the following 296-residue polypeptide: tRNA dimethylallyltransferase (296 aa).

2–9 (GPTASGKT) is an ATP binding site. 4–9 (TASGKT) serves as a coordination point for substrate. Interaction with substrate tRNA regions lie at residues 27 to 30 (DSAL), 151 to 155 (QRLSR), and 232 to 237 (RCVGYR).

It belongs to the IPP transferase family. Monomer. Mg(2+) is required as a cofactor.

The catalysed reaction is adenosine(37) in tRNA + dimethylallyl diphosphate = N(6)-dimethylallyladenosine(37) in tRNA + diphosphate. Its function is as follows. Catalyzes the transfer of a dimethylallyl group onto the adenine at position 37 in tRNAs that read codons beginning with uridine, leading to the formation of N6-(dimethylallyl)adenosine (i(6)A). The protein is tRNA dimethylallyltransferase of Shewanella baltica (strain OS155 / ATCC BAA-1091).